The sequence spans 290 residues: Bifunctional protein FolD (290 aa).

NADP(+) is bound by residues 167–169 (GRS), S192, and I233.

The protein belongs to the tetrahydrofolate dehydrogenase/cyclohydrolase family. In terms of assembly, homodimer.

It carries out the reaction (6R)-5,10-methylene-5,6,7,8-tetrahydrofolate + NADP(+) = (6R)-5,10-methenyltetrahydrofolate + NADPH. The catalysed reaction is (6R)-5,10-methenyltetrahydrofolate + H2O = (6R)-10-formyltetrahydrofolate + H(+). Its pathway is one-carbon metabolism; tetrahydrofolate interconversion. Catalyzes the oxidation of 5,10-methylenetetrahydrofolate to 5,10-methenyltetrahydrofolate and then the hydrolysis of 5,10-methenyltetrahydrofolate to 10-formyltetrahydrofolate. This is Bifunctional protein FolD from Gloeobacter violaceus (strain ATCC 29082 / PCC 7421).